Here is a 193-residue protein sequence, read N- to C-terminus: Potassium-transporting ATPase KdpC subunit (193 aa).

A helical membrane pass occupies residues 7 to 27; it reads PALVLFAALTLLTGVAYPLAV.

The protein belongs to the KdpC family. As to quaternary structure, the system is composed of three essential subunits: KdpA, KdpB and KdpC.

Its subcellular location is the cell inner membrane. In terms of biological role, part of the high-affinity ATP-driven potassium transport (or Kdp) system, which catalyzes the hydrolysis of ATP coupled with the electrogenic transport of potassium into the cytoplasm. This subunit acts as a catalytic chaperone that increases the ATP-binding affinity of the ATP-hydrolyzing subunit KdpB by the formation of a transient KdpB/KdpC/ATP ternary complex. This chain is Potassium-transporting ATPase KdpC subunit, found in Rhodospirillum rubrum (strain ATCC 11170 / ATH 1.1.1 / DSM 467 / LMG 4362 / NCIMB 8255 / S1).